Reading from the N-terminus, the 213-residue chain is Octanoyltransferase (213 aa).

Positions 28 to 203 constitute a BPL/LPL catalytic domain; the sequence is GTSPETLLLL…RFPFLLDERL (176 aa). Residues 66-73, 133-135, and 146-148 contribute to the substrate site; these read RGGDVTFH, SIG, and GFA. Catalysis depends on Cys164, which acts as the Acyl-thioester intermediate.

Belongs to the LipB family.

The protein resides in the cytoplasm. It catalyses the reaction octanoyl-[ACP] + L-lysyl-[protein] = N(6)-octanoyl-L-lysyl-[protein] + holo-[ACP] + H(+). It functions in the pathway protein modification; protein lipoylation via endogenous pathway; protein N(6)-(lipoyl)lysine from octanoyl-[acyl-carrier-protein]: step 1/2. Catalyzes the transfer of endogenously produced octanoic acid from octanoyl-acyl-carrier-protein onto the lipoyl domains of lipoate-dependent enzymes. Lipoyl-ACP can also act as a substrate although octanoyl-ACP is likely to be the physiological substrate. This chain is Octanoyltransferase, found in Geobacter metallireducens (strain ATCC 53774 / DSM 7210 / GS-15).